A 92-amino-acid polypeptide reads, in one-letter code: UPF0250 protein COSY_0496 (92 aa).

Belongs to the UPF0250 family.

The sequence is that of UPF0250 protein COSY_0496 from Vesicomyosocius okutanii subsp. Calyptogena okutanii (strain HA).